A 437-amino-acid chain; its full sequence is Transcriptional modulator WTM1 (437 aa).

The WD 1 repeat unit spans residues 103 to 144 (YQGETVSKMAYLDKTGETTLLSMSKNGSLAWFKEGIKVPIHI). A Phosphothreonine modification is found at Thr187. Phosphoserine is present on Ser200. WD repeat units lie at residues 221–259 (PGTT…KPIW), 264–304 (PKNG…AATT), and 326–366 (AGGD…SKYN). The tract at residues 368 to 404 (DDTIAPPQDATEESQTKSLRFLHKGGSRRSPKQIGRR) is disordered. Position 370 is a phosphothreonine (Thr370). Basic residues predominate over residues 387-402 (RFLHKGGSRRSPKQIG). At Thr406 the chain carries Phosphothreonine.

Interacts with KAP122.

It is found in the cytoplasm. The protein localises to the nucleus. Its function is as follows. Transcriptional modulator with roles in meiotic regulation and silencing. Acts either as an adapter to facilitate nuclear import by KAP122 of the RNR2-RNR4 heterodimer, also called beta-beta' subunit, which corresponds to the small subunit of the ribonucleotide reductase (RNR); or as an anchor to retain RNR2-RNR4 in the nucleus. In Saccharomyces cerevisiae (strain ATCC 204508 / S288c) (Baker's yeast), this protein is Transcriptional modulator WTM1 (WTM1).